Here is a 130-residue protein sequence, read N- to C-terminus: Small ribosomal subunit protein uS9 (130 aa).

Belongs to the universal ribosomal protein uS9 family.

This Xylella fastidiosa (strain 9a5c) protein is Small ribosomal subunit protein uS9.